The chain runs to 180 residues: ATP synthase subunit delta (180 aa).

The protein belongs to the ATPase delta chain family. F-type ATPases have 2 components, F(1) - the catalytic core - and F(0) - the membrane proton channel. F(1) has five subunits: alpha(3), beta(3), gamma(1), delta(1), epsilon(1). F(0) has three main subunits: a(1), b(2) and c(10-14). The alpha and beta chains form an alternating ring which encloses part of the gamma chain. F(1) is attached to F(0) by a central stalk formed by the gamma and epsilon chains, while a peripheral stalk is formed by the delta and b chains.

The protein localises to the cell inner membrane. F(1)F(0) ATP synthase produces ATP from ADP in the presence of a proton or sodium gradient. F-type ATPases consist of two structural domains, F(1) containing the extramembraneous catalytic core and F(0) containing the membrane proton channel, linked together by a central stalk and a peripheral stalk. During catalysis, ATP synthesis in the catalytic domain of F(1) is coupled via a rotary mechanism of the central stalk subunits to proton translocation. Functionally, this protein is part of the stalk that links CF(0) to CF(1). It either transmits conformational changes from CF(0) to CF(1) or is implicated in proton conduction. The sequence is that of ATP synthase subunit delta from Trichlorobacter lovleyi (strain ATCC BAA-1151 / DSM 17278 / SZ) (Geobacter lovleyi).